The following is a 550-amino-acid chain: Hydroxylamine reductase (550 aa).

[2Fe-2S] cluster contacts are provided by Cys3, Cys6, Cys18, and Cys25. Hybrid [4Fe-2O-2S] cluster-binding residues include His249, Glu273, Cys317, Cys405, Cys433, Cys458, Glu492, and Lys494. Cysteine persulfide is present on Cys405.

Belongs to the HCP family. It depends on [2Fe-2S] cluster as a cofactor. Requires hybrid [4Fe-2O-2S] cluster as cofactor.

It localises to the cytoplasm. The enzyme catalyses A + NH4(+) + H2O = hydroxylamine + AH2 + H(+). Its activity is regulated as follows. Inhibited by oxygen. Activated by cyanide except in the prolonged presence of excess cyanide, where the enzyme is inactivated. In terms of biological role, catalyzes the reduction of hydroxylamine to form NH(3) and H(2)O. Is also able to reduce hydroxylamine analogs such as methylhydroxylamine and hydroxyquinone. Might have a role as a scavenger of potentially toxic by-products of nitrate metabolism. The polypeptide is Hydroxylamine reductase (Escherichia coli (strain K12)).